A 706-amino-acid chain; its full sequence is Elongation factor G (706 aa).

The region spanning 15–291 (LKTRNIGISA…GVLDYLASPV (277 aa)) is the tr-type G domain. GTP contacts are provided by residues 24–31 (AHIDSGKT), 91–95 (DTPGH), and 145–148 (NKLD).

The protein belongs to the TRAFAC class translation factor GTPase superfamily. Classic translation factor GTPase family. EF-G/EF-2 subfamily.

The protein resides in the cytoplasm. Its function is as follows. Catalyzes the GTP-dependent ribosomal translocation step during translation elongation. During this step, the ribosome changes from the pre-translocational (PRE) to the post-translocational (POST) state as the newly formed A-site-bound peptidyl-tRNA and P-site-bound deacylated tRNA move to the P and E sites, respectively. Catalyzes the coordinated movement of the two tRNA molecules, the mRNA and conformational changes in the ribosome. This Leptospira borgpetersenii serovar Hardjo-bovis (strain L550) protein is Elongation factor G.